Consider the following 234-residue polypeptide: Phosphoribosylaminoimidazole-succinocarboxamide synthase (234 aa).

This sequence belongs to the SAICAR synthetase family.

The enzyme catalyses 5-amino-1-(5-phospho-D-ribosyl)imidazole-4-carboxylate + L-aspartate + ATP = (2S)-2-[5-amino-1-(5-phospho-beta-D-ribosyl)imidazole-4-carboxamido]succinate + ADP + phosphate + 2 H(+). It functions in the pathway purine metabolism; IMP biosynthesis via de novo pathway; 5-amino-1-(5-phospho-D-ribosyl)imidazole-4-carboxamide from 5-amino-1-(5-phospho-D-ribosyl)imidazole-4-carboxylate: step 1/2. The sequence is that of Phosphoribosylaminoimidazole-succinocarboxamide synthase from Clostridium botulinum (strain Loch Maree / Type A3).